The chain runs to 181 residues: Oligoribonuclease (181 aa).

The region spanning leucine 8–leucine 171 is the Exonuclease domain. Residue tyrosine 129 is part of the active site.

It belongs to the oligoribonuclease family.

It is found in the cytoplasm. 3'-to-5' exoribonuclease specific for small oligoribonucleotides. The polypeptide is Oligoribonuclease (Shewanella putrefaciens (strain CN-32 / ATCC BAA-453)).